A 377-amino-acid polypeptide reads, in one-letter code: Spermidine/putrescine import ATP-binding protein PotA (377 aa).

One can recognise an ABC transporter domain in the interval 18-248; sequence IRLSGISKSF…PKNLFVARFI (231 aa). 50-57 serves as a coordination point for ATP; that stretch reads GPSGCGKT.

This sequence belongs to the ABC transporter superfamily. Spermidine/putrescine importer (TC 3.A.1.11.1) family. In terms of assembly, the complex is composed of two ATP-binding proteins (PotA), two transmembrane proteins (PotB and PotC) and a solute-binding protein (PotD).

The protein resides in the cell inner membrane. The enzyme catalyses ATP + H2O + polyamine-[polyamine-binding protein]Side 1 = ADP + phosphate + polyamineSide 2 + [polyamine-binding protein]Side 1.. Part of the ABC transporter complex PotABCD involved in spermidine/putrescine import. Responsible for energy coupling to the transport system. In Vibrio parahaemolyticus serotype O3:K6 (strain RIMD 2210633), this protein is Spermidine/putrescine import ATP-binding protein PotA.